The primary structure comprises 438 residues: MPTHSLFLLSLGCSKNTVDSERLLAQAAAAAIRSVERVDEADTILINTCAFIEDAKKESIEEMLAALDKKREGVVKQVFVMGCLPELYRRELQEELPEVDAFFGTRELPQILASLGARYRSELFDERLLLTPSHYAYLKISEGCNRICSFCSIPKIRGRYQSQPLEQLLREATRLQQQGVQELNLIAQDISLFGYDTTGHSQLNELLLRLSDMDFLWIRLLYAYPVNFPLEVIDTMRDRSNICNYLDIPLQHCNDRILRAMKRGVTKADTIRLLHEMRQRNPNIRLRTTMLVGFPGETRAEFEELLDFVEEQRFDRLGCFPYNHEEHAPSAMLEDLLSIEEKEERVSELMELQEAVAESLNREFEGKEIEVVVDSFVEEMAFCRSEYDAPEVDNECLLTFGAQNIQAGNFYRALINDSSAHELYGEIVQERSAGNSPQ.

In terms of domain architecture, MTTase N-terminal spans 4–120 (HSLFLLSLGC…ILASLGARYR (117 aa)). Residues C13, C49, C83, C144, C148, and C151 each coordinate [4Fe-4S] cluster. Residues 130 to 359 (LTPSHYAYLK…MELQEAVAES (230 aa)) enclose the Radical SAM core domain. A TRAM domain is found at 362–429 (REFEGKEIEV…AHELYGEIVQ (68 aa)).

This sequence belongs to the methylthiotransferase family. RimO subfamily. [4Fe-4S] cluster is required as a cofactor.

It localises to the cytoplasm. The enzyme catalyses L-aspartate(89)-[ribosomal protein uS12]-hydrogen + (sulfur carrier)-SH + AH2 + 2 S-adenosyl-L-methionine = 3-methylsulfanyl-L-aspartate(89)-[ribosomal protein uS12]-hydrogen + (sulfur carrier)-H + 5'-deoxyadenosine + L-methionine + A + S-adenosyl-L-homocysteine + 2 H(+). Its function is as follows. Catalyzes the methylthiolation of an aspartic acid residue of ribosomal protein uS12. The polypeptide is Ribosomal protein uS12 methylthiotransferase RimO (Chlorobium chlorochromatii (strain CaD3)).